The following is a 693-amino-acid chain: MSLAQQINRVVAPFEVISEYQPAGDQPAAIADLTERINNGEKDVVLLGATGTGKSATTAWLIEQVQRPTLVMVQNKTLAAQLANEFRELLPNNAVEYFVSYYDYYQPEAYVPQTDTFIEKDSSVNEEVERLRYSATNSLLTRRDVIVVATVSCIYGLGTPEEYVAGMVTLKQGDRVDRDQLLRQFVGIQYTRNDIDFHRGTFRVRGDTVEITPMYEEQALRIEFFGDEIEKIFTLHPLTGEIIREENEMYVFPASHYVAGPERMAKAITRIEDELAVRLKELEGQNKLLEAQRLRMRTTYDLEMMQQMGFCNGIENYSRHIDGRDSGSAPSCLIDYFPDDFLLVIDESHVTLPQIGAMYEGDMSRKRTLVDHGFRLPSAMDNRPLKWDEFLERVGQTVYLSATPGKYEMAKADGVVQQIIRPTGLIDPEVIIKPTKGQIDDLLGEIRTRVERDERVLVTTLTKRMAEDLTEYLLGHGVKVQYLHSDVDTLRRVELLRELRLGVFDVLVGINLLREGLDLPEVSLVSILDADKEGFLRSATSLIQTIGRAARNVSGEVHMYADKITDSMAKAIDETNRRRAIQVAYNTEHGVDPTPLRKRIADITDSLAREDADTKSLLESAGKGRSRGKAPVPVRHDGLAAVPAEDLVDLIEQLTAQMHSAAGELQFELAARLRDEVGDLKKELRQMQSAGHA.

Residues 35-188 (ERINNGEKDV…DQLLRQFVGI (154 aa)) enclose the Helicase ATP-binding domain. 48–55 (GATGTGKS) lines the ATP pocket. Positions 101-124 (YYDYYQPEAYVPQTDTFIEKDSSV) match the Beta-hairpin motif. One can recognise a Helicase C-terminal domain in the interval 438 to 600 (QIDDLLGEIR…VDPTPLRKRI (163 aa)). The tract at residues 612–634 (ADTKSLLESAGKGRSRGKAPVPV) is disordered. Positions 648–683 (VDLIEQLTAQMHSAAGELQFELAARLRDEVGDLKKE) constitute a UVR domain.

It belongs to the UvrB family. As to quaternary structure, forms a heterotetramer with UvrA during the search for lesions. Interacts with UvrC in an incision complex.

The protein resides in the cytoplasm. Its function is as follows. The UvrABC repair system catalyzes the recognition and processing of DNA lesions. A damage recognition complex composed of 2 UvrA and 2 UvrB subunits scans DNA for abnormalities. Upon binding of the UvrA(2)B(2) complex to a putative damaged site, the DNA wraps around one UvrB monomer. DNA wrap is dependent on ATP binding by UvrB and probably causes local melting of the DNA helix, facilitating insertion of UvrB beta-hairpin between the DNA strands. Then UvrB probes one DNA strand for the presence of a lesion. If a lesion is found the UvrA subunits dissociate and the UvrB-DNA preincision complex is formed. This complex is subsequently bound by UvrC and the second UvrB is released. If no lesion is found, the DNA wraps around the other UvrB subunit that will check the other stand for damage. This chain is UvrABC system protein B, found in Renibacterium salmoninarum (strain ATCC 33209 / DSM 20767 / JCM 11484 / NBRC 15589 / NCIMB 2235).